Here is a 37-residue protein sequence, read N- to C-terminus: Large ribosomal subunit protein bL36c (37 aa).

It belongs to the bacterial ribosomal protein bL36 family.

The protein localises to the plastid. Its subcellular location is the chloroplast. This is Large ribosomal subunit protein bL36c (rpl36) from Cyanidium caldarium (Red alga).